The following is an 878-amino-acid chain: Phosphoenolpyruvate carboxylase (878 aa).

Residues H137 and K545 contribute to the active site.

This sequence belongs to the PEPCase type 1 family. It depends on Mg(2+) as a cofactor.

The catalysed reaction is oxaloacetate + phosphate = phosphoenolpyruvate + hydrogencarbonate. Functionally, forms oxaloacetate, a four-carbon dicarboxylic acid source for the tricarboxylic acid cycle. This is Phosphoenolpyruvate carboxylase from Yersinia pestis bv. Antiqua (strain Antiqua).